The sequence spans 370 residues: MGQTLSEPVLDKHSSSGGDRWLHFGVSHMQGWRISMEDAHCALLNFTDSNSSNPPTSFFGVFDGHGGDRVAKYCRQHLPDIIKSQPSFWKGNYDEALKSGFLAADNALMQDRDMQEDPSGCTATTALIVDHQVIYCANAGDSRTVLGRKGTAEPLSFDHKPNNDVEKARITAAGGFIDFGRVNGSLALSRAIGDFEYKKDSSLPPEKQIVTAFPDVVIHNIDPDDEFLILACDGIWDCKSSQQVVEFVRRGIVARQSLEVICENLMDRCIASNSESCGIGCDNMTICIVAFLHGRGLEDWYNWITQRVNSGEGPCAPPSYAELRGPNTIADARNLQLEYDHIASHEYGSGDTYDSDSDDETIAYDRYYLH.

Residues 23–291 (HFGVSHMQGW…DNMTICIVAF (269 aa)) enclose the PPM-type phosphatase domain. Asp63, Gly64, Asp233, and Asp282 together coordinate Mn(2+). Phosphoserine occurs at positions 355 and 357.

It belongs to the PP2C family. Monomer. The cofactor is Mg(2+). It depends on Mn(2+) as a cofactor.

The protein resides in the nucleus. It localises to the cytoplasm. It is found in the cytosol. The enzyme catalyses O-phospho-L-seryl-[protein] + H2O = L-seryl-[protein] + phosphate. The catalysed reaction is O-phospho-L-threonyl-[protein] + H2O = L-threonyl-[protein] + phosphate. Its activity is regulated as follows. Activity is reduced when phosphosrylated at Ser-355/Ser-357. Functionally, dephosphorylating regulator for many key proteins. Has an important role in osmotic stability and cell shape control. It may negatively regulate the osmosensing signal transmitted through wis1 map kinase. This chain is Protein phosphatase 2C homolog 2 (ptc2), found in Schizosaccharomyces pombe (strain 972 / ATCC 24843) (Fission yeast).